A 288-amino-acid chain; its full sequence is ATP synthase gamma chain (288 aa).

It belongs to the ATPase gamma chain family. In terms of assembly, F-type ATPases have 2 components, CF(1) - the catalytic core - and CF(0) - the membrane proton channel. CF(1) has five subunits: alpha(3), beta(3), gamma(1), delta(1), epsilon(1). CF(0) has three main subunits: a, b and c.

It localises to the cell inner membrane. Its function is as follows. Produces ATP from ADP in the presence of a proton gradient across the membrane. The gamma chain is believed to be important in regulating ATPase activity and the flow of protons through the CF(0) complex. The protein is ATP synthase gamma chain of Vibrio parahaemolyticus serotype O3:K6 (strain RIMD 2210633).